The primary structure comprises 509 residues: NAD-dependent histone deacetylase SIR2 (509 aa).

The segment at 1 to 35 (MIISRGSHVDEEPVAKKPRISVGEMTDDTTDDGLN) is disordered. Acidic residues predominate over residues 25-35 (MTDDTTDDGLN). The Deacetylase sirtuin-type domain maps to 185-476 (RLSNFYTIDH…TVVAQKCEWD (292 aa)). Residues 210 to 229 (GAGVSTSLGIPDFRSSEGFY) and 292 to 295 (QNID) each bind NAD(+). The active-site Proton acceptor is His-312. Residues Cys-320, Cys-323, Cys-344, and Cys-347 each contribute to the Zn(2+) site. Residues 420-422 (GTS), 445-447 (NKD), and Cys-462 each bind NAD(+).

This sequence belongs to the sirtuin family. Class I subfamily. Requires Zn(2+) as cofactor.

It is found in the nucleus. The catalysed reaction is N(6)-acetyl-L-lysyl-[protein] + NAD(+) + H2O = 2''-O-acetyl-ADP-D-ribose + nicotinamide + L-lysyl-[protein]. Its function is as follows. NAD-dependent deacetylase. Heterochromatin component that silences transcription at silent mating loci, telomeres and the ribosomal DNA, and that also suppresses recombination in the rDNA and extends replicative life span. It acts as a NAD-dependent histone deacetylase, which deacetylates 'Lys-9' and 'Lys-14' of Histone H3 and 'Lys-16' of Histone H4. In Candida glabrata (strain ATCC 2001 / BCRC 20586 / JCM 3761 / NBRC 0622 / NRRL Y-65 / CBS 138) (Yeast), this protein is NAD-dependent histone deacetylase SIR2 (SIR2).